The chain runs to 438 residues: Methylenetetrahydrofolate--tRNA-(uracil-5-)-methyltransferase TrmFO (438 aa).

An FAD-binding site is contributed by 9–14 (GGGLAG).

Belongs to the MnmG family. TrmFO subfamily. Requires FAD as cofactor.

It localises to the cytoplasm. The catalysed reaction is uridine(54) in tRNA + (6R)-5,10-methylene-5,6,7,8-tetrahydrofolate + NADH + H(+) = 5-methyluridine(54) in tRNA + (6S)-5,6,7,8-tetrahydrofolate + NAD(+). It catalyses the reaction uridine(54) in tRNA + (6R)-5,10-methylene-5,6,7,8-tetrahydrofolate + NADPH + H(+) = 5-methyluridine(54) in tRNA + (6S)-5,6,7,8-tetrahydrofolate + NADP(+). Functionally, catalyzes the folate-dependent formation of 5-methyl-uridine at position 54 (M-5-U54) in all tRNAs. This chain is Methylenetetrahydrofolate--tRNA-(uracil-5-)-methyltransferase TrmFO, found in Lactobacillus gasseri (strain ATCC 33323 / DSM 20243 / BCRC 14619 / CIP 102991 / JCM 1131 / KCTC 3163 / NCIMB 11718 / NCTC 13722 / AM63).